A 180-amino-acid chain; its full sequence is ATP-dependent Clp protease proteolytic subunit 2 (180 aa).

Ser86 functions as the Nucleophile in the catalytic mechanism. Residue His111 is part of the active site.

This sequence belongs to the peptidase S14 family. In terms of assembly, fourteen ClpP subunits assemble into 2 heptameric rings which stack back to back to give a disk-like structure with a central cavity, resembling the structure of eukaryotic proteasomes.

It localises to the cytoplasm. The enzyme catalyses Hydrolysis of proteins to small peptides in the presence of ATP and magnesium. alpha-casein is the usual test substrate. In the absence of ATP, only oligopeptides shorter than five residues are hydrolyzed (such as succinyl-Leu-Tyr-|-NHMec, and Leu-Tyr-Leu-|-Tyr-Trp, in which cleavage of the -Tyr-|-Leu- and -Tyr-|-Trp bonds also occurs).. Functionally, cleaves peptides in various proteins in a process that requires ATP hydrolysis. Has a chymotrypsin-like activity. Plays a major role in the degradation of misfolded proteins. This chain is ATP-dependent Clp protease proteolytic subunit 2, found in Tropheryma whipplei (strain Twist) (Whipple's bacillus).